Consider the following 221-residue polypeptide: Octanoyltransferase (221 aa).

Positions 29 to 208 (DEIPDTCLLL…RLTEFLLPAR (180 aa)) constitute a BPL/LPL catalytic domain. Residues 67–74 (RGGRITWH), 138–140 (AIG), and 151–153 (GFA) each bind substrate. C169 functions as the Acyl-thioester intermediate in the catalytic mechanism.

This sequence belongs to the LipB family.

Its subcellular location is the cytoplasm. It catalyses the reaction octanoyl-[ACP] + L-lysyl-[protein] = N(6)-octanoyl-L-lysyl-[protein] + holo-[ACP] + H(+). The protein operates within protein modification; protein lipoylation via endogenous pathway; protein N(6)-(lipoyl)lysine from octanoyl-[acyl-carrier-protein]: step 1/2. Its function is as follows. Catalyzes the transfer of endogenously produced octanoic acid from octanoyl-acyl-carrier-protein onto the lipoyl domains of lipoate-dependent enzymes. Lipoyl-ACP can also act as a substrate although octanoyl-ACP is likely to be the physiological substrate. The chain is Octanoyltransferase from Acidothermus cellulolyticus (strain ATCC 43068 / DSM 8971 / 11B).